The chain runs to 176 residues: dCTP deaminase (176 aa).

DCTP contacts are provided by residues Arg-102 to Arg-107 and Asp-118. Glu-128 functions as the Proton donor/acceptor in the catalytic mechanism. 2 residues coordinate dCTP: Tyr-160 and Gln-167.

Belongs to the dCTP deaminase family. Homotrimer.

The catalysed reaction is dCTP + H2O + H(+) = dUTP + NH4(+). The protein operates within pyrimidine metabolism; dUMP biosynthesis; dUMP from dCTP (dUTP route): step 1/2. In terms of biological role, catalyzes the deamination of dCTP to dUTP. This chain is dCTP deaminase, found in Hyperthermus butylicus (strain DSM 5456 / JCM 9403 / PLM1-5).